The following is a 61-amino-acid chain: Insect toxin BsIT2 (61 aa).

Residues 1 to 61 (DGYIKKSKGC…RWKYETKTCK (61 aa)) enclose the LCN-type CS-alpha/beta domain. 4 disulfides stabilise this stretch: Cys-10–Cys-60, Cys-14–Cys-35, Cys-21–Cys-42, and Cys-25–Cys-44.

It belongs to the long (4 C-C) scorpion toxin superfamily. Sodium channel inhibitor family. Beta subfamily. As to expression, expressed by the venom gland.

The protein localises to the secreted. Its function is as follows. Depressant insect beta-toxins cause a transient contraction paralysis followed by a slow flaccid paralysis. They bind voltage-independently at site-4 of sodium channels (Nav) and shift the voltage of activation toward more negative potentials thereby affecting sodium channel activation and promoting spontaneous and repetitive firing. This toxin is active only on insects. This Hottentotta tamulus sindicus (Scorpion) protein is Insect toxin BsIT2.